The sequence spans 127 residues: Large ribosomal subunit protein eL32 (127 aa).

The segment covering 37–48 (KWRKPKGTDSKM) has biased composition (basic and acidic residues). Residues 37–65 (KWRKPKGTDSKMRVKLKGKARSPSIGWSS) form a disordered region.

This sequence belongs to the eukaryotic ribosomal protein eL32 family.

The polypeptide is Large ribosomal subunit protein eL32 (Thermococcus sibiricus (strain DSM 12597 / MM 739)).